The sequence spans 60 residues: Large ribosomal subunit protein uL30 (60 aa).

Belongs to the universal ribosomal protein uL30 family. In terms of assembly, part of the 50S ribosomal subunit.

The chain is Large ribosomal subunit protein uL30 from Clavibacter michiganensis subsp. michiganensis (strain NCPPB 382).